The primary structure comprises 183 residues: Inner membrane-spanning protein YciB (183 aa).

The next 5 membrane-spanning stretches (helical) occupy residues 22-44 (VQAA…RILF), 53-73 (IVGL…DLAF), 76-96 (WKVT…QYVF), 121-141 (LGWA…SQLF), and 153-173 (GFTG…YPYI).

This sequence belongs to the YciB family.

It is found in the cell inner membrane. Plays a role in cell envelope biogenesis, maintenance of cell envelope integrity and membrane homeostasis. The chain is Inner membrane-spanning protein YciB from Haemophilus ducreyi (strain 35000HP / ATCC 700724).